The chain runs to 457 residues: RuvB-like helicase 1 (457 aa).

Position 72 to 79 (72 to 79 (GAPGTGKT)) interacts with ATP.

Belongs to the RuvB family. May form heterododecamers with RVB2. Component of the SWR1 chromatin remodeling complex, the INO80 chromatin remodeling complex, and of the R2TP complex.

It localises to the nucleus. It carries out the reaction ATP + H2O = ADP + phosphate + H(+). Functionally, DNA helicase which participates in several chromatin remodeling complexes, including the SWR1 and the INO80 complexes. The SWR1 complex mediates the ATP-dependent exchange of histone H2A for the H2A variant HZT1 leading to transcriptional regulation of selected genes by chromatin remodeling. The INO80 complex remodels chromatin by shifting nucleosomes and is involved in DNA repair. Also involved in pre-rRNA processing. This chain is RuvB-like helicase 1 (RBV1), found in Debaryomyces hansenii (strain ATCC 36239 / CBS 767 / BCRC 21394 / JCM 1990 / NBRC 0083 / IGC 2968) (Yeast).